The sequence spans 81 residues: Photosystem I iron-sulfur center (81 aa).

4Fe-4S ferredoxin-type domains follow at residues 2 to 31 (SHSVKIYDTCIGCTQCVRACPTDVLEMIPW) and 39 to 68 (IAPAPRTEDCVGCKRCESACPTDFLSVRVY). Positions 11, 14, 17, 21, 48, 51, 54, and 58 each coordinate [4Fe-4S] cluster.

In terms of assembly, the eukaryotic PSI reaction center is composed of at least 11 subunits. The cofactor is [4Fe-4S] cluster.

It is found in the plastid. Its subcellular location is the chloroplast thylakoid membrane. It carries out the reaction reduced [plastocyanin] + hnu + oxidized [2Fe-2S]-[ferredoxin] = oxidized [plastocyanin] + reduced [2Fe-2S]-[ferredoxin]. Its function is as follows. Apoprotein for the two 4Fe-4S centers FA and FB of photosystem I (PSI); essential for photochemical activity. FB is the terminal electron acceptor of PSI, donating electrons to ferredoxin. The C-terminus interacts with PsaA/B/D and helps assemble the protein into the PSI complex. Required for binding of PsaD and PsaE to PSI. PSI is a plastocyanin-ferredoxin oxidoreductase, converting photonic excitation into a charge separation, which transfers an electron from the donor P700 chlorophyll pair to the spectroscopically characterized acceptors A0, A1, FX, FA and FB in turn. The chain is Photosystem I iron-sulfur center from Liriodendron tulipifera (Tuliptree).